Reading from the N-terminus, the 503-residue chain is MDFSIKGCDWSKGEAKGFLTGKSDCIVLGIFEAQTLSGAALDIDTATKGLISRVIKAGDMDGKRGKTLFLHEVSGIGASRVLLVGLGKQDAFNQKAYNDAVTAAWRALLATKVVQVTFTLAQLPVDERSSDWGVRAAILALRNETYRFTQMKSKPEPASHTLKRVVFSVDPSDEKAAKVAVKQAVALANGMDLTRDLGNLPGNVCTPTYLGNTAKKIAKDWGLKAEVLGLKQIQALKMGSFLSVARASVEPPQFIVLHYQGAAAKAAPVVLVGKGITFDTGGISLKPGEGMDEMKYDMCGAGSVLGTMRAVAEMGLKINVVAIVPTCENMPGGNATKPGDIVTSMKGLTIEVLNTDAEGRLILCDALTYAERFKPAAVIDVATLTGACVIALGGHNSGLFSTDDALAGELLDASREANDPAWRMPLDDEYQDQLKSNFADLANIGGRPAGAVTAACFLSRFTESYPWAHLDIAGTAWKGGAAKGATGRPVPLLAQFLIDRAGQ.

Residues lysine 274 and aspartate 279 each coordinate Mn(2+). Lysine 286 is a catalytic residue. Mn(2+)-binding residues include aspartate 297, aspartate 356, and glutamate 358. Residue arginine 360 is part of the active site.

Belongs to the peptidase M17 family. Mn(2+) serves as cofactor.

The protein localises to the cytoplasm. The catalysed reaction is Release of an N-terminal amino acid, Xaa-|-Yaa-, in which Xaa is preferably Leu, but may be other amino acids including Pro although not Arg or Lys, and Yaa may be Pro. Amino acid amides and methyl esters are also readily hydrolyzed, but rates on arylamides are exceedingly low.. It catalyses the reaction Release of an N-terminal amino acid, preferentially leucine, but not glutamic or aspartic acids.. Presumably involved in the processing and regular turnover of intracellular proteins. Catalyzes the removal of unsubstituted N-terminal amino acids from various peptides. The chain is Probable cytosol aminopeptidase from Burkholderia lata (strain ATCC 17760 / DSM 23089 / LMG 22485 / NCIMB 9086 / R18194 / 383).